We begin with the raw amino-acid sequence, 398 residues long: Riboflavin transporter RfnT (398 aa).

Helical transmembrane passes span 13–35 (ILTI…GGLV), 45–67 (LVTL…AAFF), 74–91 (RNAY…GVIA), 95–117 (IFAA…ASYV), 137–156 (ISWV…QLVI), 166–188 (MFAG…LFML), 220–242 (VAAG…IAMV), 252–274 (ALGI…KLIT), 281–300 (ITAL…LGGF), 305–324 (FWGA…IGAT), 345–367 (FIMF…SSGW), and 372–389 (WLVF…ILRL).

This sequence belongs to the major facilitator superfamily.

The protein resides in the cell membrane. Transports riboflavin into the cell. The polypeptide is Riboflavin transporter RfnT (Brucella anthropi (strain ATCC 49188 / DSM 6882 / CCUG 24695 / JCM 21032 / LMG 3331 / NBRC 15819 / NCTC 12168 / Alc 37) (Ochrobactrum anthropi)).